We begin with the raw amino-acid sequence, 292 residues long: Porphobilinogen deaminase (292 aa).

Cysteine 236 bears the S-(dipyrrolylmethanemethyl)cysteine mark.

The protein belongs to the HMBS family. Monomer. Dipyrromethane is required as a cofactor.

It catalyses the reaction 4 porphobilinogen + H2O = hydroxymethylbilane + 4 NH4(+). The protein operates within porphyrin-containing compound metabolism; protoporphyrin-IX biosynthesis; coproporphyrinogen-III from 5-aminolevulinate: step 2/4. Functionally, tetrapolymerization of the monopyrrole PBG into the hydroxymethylbilane pre-uroporphyrinogen in several discrete steps. The polypeptide is Porphobilinogen deaminase (Wolbachia sp. subsp. Drosophila simulans (strain wRi)).